Consider the following 503-residue polypeptide: MPNVAETERSNDSGNGEHKSERKSPEENLQGAVKSFCTSASGAPLGPKGDGHYPWSCPVTHTREKIYAICSDYAFLNQATSIYKTPNPSRSPCLPDSTSLSAGNNSSRYIGIPTSTSEIIYNEENSLENLSNSLGKLPLAWEIDKSEFDGVTTNSKHKSGNAKKQVSKRKTSDKKGRYQKECPQHSPLEDIKQRKVLDLRRWYCISRPQYKTSCGISSLISCWNFLYSTMGAGNLPPITQEEALHILGFQPPFEDIRFGPFTGNTTLMRWFRQINDHFHVKGCSYVLYKPHGKNKTAGETASGALSKLTRGLKDESLAYIYHCQNHYFCPIGFEATPVKANKAFSRGPLSPQEVEYWILIGESSRKHPAIHCKKWADIVTDLNTQNPEYLDIRHLERGLQYRKTKKVGGNLHCIIAFQRLNWQRFGLWNFPFGTIRQESQPPTHAQGIAKSESEDNISKKQHGRLGRSFSASFHQDSAWKKMSSIHERRNSGYQGYSDYDGND.

Basic and acidic residues predominate over residues 1 to 26 (MPNVAETERSNDSGNGEHKSERKSPE). Disordered regions lie at residues 1–33 (MPNVAETERSNDSGNGEHKSERKSPEENLQGAV), 152–184 (TTNSKHKSGNAKKQVSKRKTSDKKGRYQKECPQ), and 438–469 (ESQPPTHAQGIAKSESEDNISKKQHGRLGRSF). Basic residues predominate over residues 155 to 172 (SKHKSGNAKKQVSKRKTS). Residues 173 to 184 (DKKGRYQKECPQ) are compositionally biased toward basic and acidic residues.

It belongs to the BIVM family. In terms of tissue distribution, widely expressed. Expressed at higher level in spleen, ovary, small intestine, colon, peripheral blood leukocytes and liver. Also expressed in testis, ovary, aorta, appendix, trachea, pituitary gland, bladder, uterus, spinal cord, salivary gland, stomach, mammary gland and bone marrow. Weakly or not expressed in fetal spleen, adult thymus and certain cancer cell lines.

The protein localises to the cytoplasm. The protein resides in the nucleus. The chain is Basic immunoglobulin-like variable motif-containing protein (BIVM) from Homo sapiens (Human).